Reading from the N-terminus, the 356-residue chain is Solute carrier family 25 member 3 (356 aa).

Residues 1–44 (MFSSVAHLARANPFNAPHLQLVHDVSGPRSPPGPPRRSRHLAAA) constitute a mitochondrion transit peptide. Over 45-57 (AVEGYSCEFGSMK) the chain is Mitochondrial intermembrane. Solcar repeat units follow at residues 57-141 (KYYA…FKAL), 154-238 (WRTS…TVEA), and 255-333 (EQLV…VKVY). The chain crosses the membrane as a helical span at residues 58–80 (YYALCGFGGVLSCGLTHTAVVPL). Over 81 to 115 (DLVKCRMQVDPQKYKGIFNGFSITLKEDGVRGLAK) the chain is Mitochondrial matrix. An N6-acetyllysine modification is found at lysine 93. An N6-methyllysine modification is found at lysine 106. A helical membrane pass occupies residues 116–135 (GWAPTLIGYSMQGLCKFGFY). The Mitochondrial intermembrane portion of the chain corresponds to 136–155 (EVFKALYSNILGEENTYLWR). A helical transmembrane segment spans residues 156–177 (TSLYLAASASAEFFADIALAPM). Residues 178-212 (EAAKVRIQTQPGYANTLREAVPKMYKEEGLNAFYK) lie on the Mitochondrial matrix side of the membrane. Tyrosine 190 is modified (phosphotyrosine). Position 203 is an N6-acetyllysine (lysine 203). The helical transmembrane segment at 213–232 (GVAPVWMRQIPYTMMKFACF) threads the bilayer. At 233-255 (ERTVEALYKFVVPKPRSECTKAE) the chain is on the mitochondrial intermembrane side. The chain crosses the membrane as a helical span at residues 256–278 (QLVVTFVAGYIAGVFCAIVSHPA). At 279-308 (DSVVSVLNKEKGSTASQVLQRLGFRGVWKG) the chain is on the mitochondrial matrix side. Residues 309–327 (LFARIIMIGTLTALQWFIY) form a helical membrane-spanning segment. The Mitochondrial intermembrane portion of the chain corresponds to 328 to 356 (DSVKVYFRLPRPPPPEMPESLKKKLGLTE).

Belongs to the mitochondrial carrier (TC 2.A.29) family. In terms of assembly, interacts with PPIF; the interaction is impaired by CsA.

It is found in the mitochondrion inner membrane. The catalysed reaction is phosphate(in) + H(+)(in) = phosphate(out) + H(+)(out). Inorganic ion transporter that transports phosphate or copper ions across the mitochondrial inner membrane into the matrix compartment. Mediates proton-coupled symport of phosphate ions necessary for mitochondrial oxidative phosphorylation of ADP to ATP. Transports copper ions probably in the form of anionic copper(I) complexes to maintain mitochondrial matrix copper pool and to supply copper for cytochrome C oxidase complex assembly. May also play a role in regulation of the mitochondrial permeability transition pore (mPTP). This Rattus norvegicus (Rat) protein is Solute carrier family 25 member 3.